The following is a 200-amino-acid chain: Glycerol-3-phosphate acyltransferase (200 aa).

The next 5 membrane-spanning stretches (helical) occupy residues 1–21 (MITVILIFSAYLLGSISFAVV), 51–71 (VAAAVTLLGDAGKGWVAVVVA), 84–104 (VIASAALAVFLGHLFPIFLAF), 116–136 (ILLGLNLWLGILAILTWIIVA), and 159–179 (FLLQKEMLTITVLIISILLIL).

This sequence belongs to the PlsY family. Probably interacts with PlsX.

It is found in the cell inner membrane. The catalysed reaction is an acyl phosphate + sn-glycerol 3-phosphate = a 1-acyl-sn-glycero-3-phosphate + phosphate. It participates in lipid metabolism; phospholipid metabolism. Catalyzes the transfer of an acyl group from acyl-phosphate (acyl-PO(4)) to glycerol-3-phosphate (G3P) to form lysophosphatidic acid (LPA). This enzyme utilizes acyl-phosphate as fatty acyl donor, but not acyl-CoA or acyl-ACP. The chain is Glycerol-3-phosphate acyltransferase from Nitrosomonas eutropha (strain DSM 101675 / C91 / Nm57).